A 91-amino-acid chain; its full sequence is Large ribosomal subunit protein eL34 (91 aa).

It belongs to the eukaryotic ribosomal protein eL34 family.

In Thermofilum pendens (strain DSM 2475 / Hrk 5), this protein is Large ribosomal subunit protein eL34.